Reading from the N-terminus, the 314-residue chain is Cyclic di-GMP binding protein TDE_0214 (314 aa).

In terms of domain architecture, PilZ spans 146 to 234; it reads QKRRNERVVI…KTVRTEPVEG (89 aa). The segment covering 288-300 has biased composition (polar residues); the sequence is TPVSSPIGTNTAP. A disordered region spans residues 288-314; that stretch reads TPVSSPIGTNTAPLTPPPADSAPEQIS.

In terms of biological role, cyclic-di-GMP binding protein that plays important roles in motility, chemotaxis, biofilm formation and virulence. The protein is Cyclic di-GMP binding protein TDE_0214 of Treponema denticola (strain ATCC 35405 / DSM 14222 / CIP 103919 / JCM 8153 / KCTC 15104).